A 145-amino-acid polypeptide reads, in one-letter code: MLLTTPFVSSPVRVQGNGGSGASPWAGAATALRIQAAKQLTGRVVTTKADKTVGVEVVRLAPHPKYKRRERIKKKYQAHDPDNQFKVGDVVELRRSRPISKTKHFLAVPLPPRDTRRKSQLLPPLQSQSQSQDQDQPPTPPPSSD.

A chloroplast-targeting transit peptide spans 1–36; that stretch reads MLLTTPFVSSPVRVQGNGGSGASPWAGAATALRIQA. Residues 101-145 form a disordered region; sequence KTKHFLAVPLPPRDTRRKSQLLPPLQSQSQSQDQDQPPTPPPSSD. The segment covering 120-136 has biased composition (low complexity); the sequence is QLLPPLQSQSQSQDQDQ.

Belongs to the universal ribosomal protein uS17 family. As to quaternary structure, part of the 30S ribosomal subunit.

Its subcellular location is the plastid. It localises to the chloroplast. Its function is as follows. One of the primary rRNA binding proteins, it binds specifically to the 5'-end of 16S ribosomal RNA. The protein is Small ribosomal subunit protein uS17c (RPS17) of Oryza sativa subsp. japonica (Rice).